Reading from the N-terminus, the 1022-residue chain is Probable E3 ubiquitin-protein ligase HERC6 (1022 aa).

RCC1 repeat units lie at residues 41-92, 93-145, 147-198, 200-253, and 254-304; these read NHRV…AVCH, KGRV…ALSK, SQVF…ALSL, GTSF…VLTQ, and DGKV…AYVH. The 325-residue stretch at 693 to 1017 folds into the HECT domain; that stretch reads EATDFCKVLV…INNNRGFVSP (325 aa). The active-site Glycyl thioester intermediate is cysteine 985.

In terms of tissue distribution, detected in brain, heart, placenta and testis.

The protein localises to the cytoplasm. It localises to the cytosol. The enzyme catalyses S-ubiquitinyl-[E2 ubiquitin-conjugating enzyme]-L-cysteine + [acceptor protein]-L-lysine = [E2 ubiquitin-conjugating enzyme]-L-cysteine + N(6)-ubiquitinyl-[acceptor protein]-L-lysine.. It functions in the pathway protein modification; protein ubiquitination. In terms of biological role, E3 ubiquitin-protein ligase which accepts ubiquitin from an E2 ubiquitin-conjugating enzyme in the form of a thioester and then directly transfers the ubiquitin to targeted substrates. The sequence is that of Probable E3 ubiquitin-protein ligase HERC6 (HERC6) from Homo sapiens (Human).